The sequence spans 345 residues: High mobility group protein 20A (345 aa).

Disordered regions lie at residues 1-124 and 167-198; these read MENT…TERP and QYQN…VRGV. Composition is skewed to polar residues over residues 32–48 and 57–67; these read LSGS…PTLQ and LQQSGEQQLGN. Residues 80-94 are compositionally biased toward basic residues; the sequence is TRRGGWTKGRKRKRS. Residues 101 to 169 constitute a DNA-binding region (HMG box); the sequence is PKAPLTGYVR…RYTKELQQYQ (69 aa). Residues 112 to 124 show a composition bias toward basic and acidic residues; the sequence is MNERREQLRTERP. Polar residues predominate over residues 167 to 180; sequence QYQNTDAYQTYSRK. The stretch at 227 to 290 forms a coiled coil; that stretch reads SKAREAELRQ…QHLQSVRQAL (64 aa).

The protein localises to the nucleus. Functionally, plays a role in neuronal differentiation. The sequence is that of High mobility group protein 20A (hmg20a) from Xenopus tropicalis (Western clawed frog).